The chain runs to 555 residues: Branched-chain-amino-acid aminotransferase-like protein 1 (555 aa).

The protein belongs to the class-IV pyridoxal-phosphate-dependent aminotransferase family.

The chain is Branched-chain-amino-acid aminotransferase-like protein 1 from Arabidopsis thaliana (Mouse-ear cress).